A 296-amino-acid polypeptide reads, in one-letter code: Short-chain dehydrogenase/reductase ascJ (296 aa).

Isoleucine 28, aspartate 66, and asparagine 93 together coordinate NADP(+). Residue serine 155 is the Proton donor of the active site. 3 residues coordinate NADP(+): tyrosine 168, lysine 172, and threonine 205. The active-site Proton acceptor is tyrosine 168. Lysine 172 acts as the Lowers pKa of active site Tyr in catalysis.

The protein belongs to the short-chain dehydrogenases/reductases (SDR) family.

The enzyme catalyses ascofuranol + A = ascofuranone + AH2. It functions in the pathway secondary metabolite biosynthesis; terpenoid biosynthesis. In terms of biological role, short-chain dehydrogenase/reductase; part of the asc-2 gene cluster that mediates the biosynthesis of ascofuranone, a strong inhibitor of cyanide-insensitive alternative oxidases and a promising drug candidate against African trypanosomiasis. The first step in the pathway is performed by the non-reducing polyketide synthase ascC that produces orsellinic acid by condensing acetyl-CoA with 3 malonyl-CoA units. Orsellinic acid is then prenylated by the prenyltransferase ascA to yield ilicicolinic acid B. Ilicicolinic acid B is further reduced to ilicicolin B by the reductase ascB. The halogenase ascD then chlorinates ilicicolin B to produce ilicicolin A which is converted to ilicicolin A epoxide by the cytochrome P450 monooxygenase ascE that catalyzes stereoselective epoxidation of the terminal double bond of the prenyl group. Ilicicolin A epoxide is the last common precursor for the biosynthesis of ascofuranone and ascochlorin. The terpene cyclase ascF produces a monocyclic terpene, and the cyclization reaction is proposed to be initiated by protonation of the terminal epoxide of ilicicolin A epoxide to generate a monocyclic tertiarycation, which is followed by a series of hydride and methyl shifts with abstraction of proton, leading to the formation of the (14S,15R,19R)-trimethylcyclohexanone ring structure of ilicicolin C, which is finally reduced to ascochlorin by the dehydrogenase ascG. On the other hand, ilicicolin A epoxide is hydroxylated by the cytochrome P450 monooxygenase ascH, and the resultant product is cyclized by the terpene cyclase ascI to ascofuranol via protonation-initiated epoxide ring opening, which facilitates the 6-endo-tet cyclization to form the tetrahy-drofuran ring. Finally, ascofuranol is oxidized into ascofuranone by ascJ. The chain is Short-chain dehydrogenase/reductase ascJ from Acremonium egyptiacum (Oospora egyptiaca).